A 454-amino-acid polypeptide reads, in one-letter code: Venom prothrombin activator porpharin-D (454 aa).

An N-terminal signal peptide occupies residues 1–20 (MAPQLLLCLILTFLWSLPEA). The propeptide occupies 21 to 40 (ESNVFLKSKEANRFLQRTKR). Positions 41–86 (SNSLFEEFRPGNIERECIEEKCSKEEAREIFKDNEKTEAFWNVYVD) constitute a Gla domain. 10 positions are modified to 4-carboxyglutamate: E46, E47, E54, E56, E59, E60, E65, E66, E69, and E75. C57 and C62 are disulfide-bonded. Residues 86–122 (DGDQCSSNPCHYGGTCKDGIGSYTCTCLPNYEGKNCE) enclose the EGF-like 1; calcium-binding domain. Cystine bridges form between C90–C101, C95–C110, C112–C121, C129–C140, C136–C149, C151–C164, C172–C316, C216–C221, C236–C252, C364–C378, and C389–C417. The O-linked (Hex...) serine glycan is linked to S92. The region spanning 129–164 (CRFFNGNCWHFCKPVQNDTQCSCAESYRLGDDGHSC) is the EGF-like 2 domain. The propeptide at 182–209 (REASLPDFVQSQNATLLKKSDNPSPDIR) is activation peptide. The Peptidase S1 domain occupies 210–441 (IINGMDCKLG…FIPWIKAVMR (232 aa)). Catalysis depends on charge relay system residues H251 and D296. S393 functions as the Charge relay system in the catalytic mechanism.

It belongs to the peptidase S1 family. Snake venom subfamily. Heterodimer of a light chain and a heavy chain; disulfide-linked. The vitamin K-dependent, enzymatic carboxylation of some glutamate residues allows the modified protein to bind calcium. Expressed by the venom gland.

Its subcellular location is the secreted. The enzyme catalyses Selective cleavage of Arg-|-Thr and then Arg-|-Ile bonds in prothrombin to form thrombin.. In terms of biological role, snake prothrombin activator that attacks the hemostatic system of prey. This protein is functionally similar to blood coagulation factor Xa. This Pseudechis porphyriacus (Red-bellied black snake) protein is Venom prothrombin activator porpharin-D.